The following is a 141-amino-acid chain: ATP synthase epsilon chain (141 aa).

It belongs to the ATPase epsilon chain family. In terms of assembly, F-type ATPases have 2 components, CF(1) - the catalytic core - and CF(0) - the membrane proton channel. CF(1) has five subunits: alpha(3), beta(3), gamma(1), delta(1), epsilon(1). CF(0) has three main subunits: a, b and c.

The protein localises to the cell inner membrane. Produces ATP from ADP in the presence of a proton gradient across the membrane. This Halorhodospira halophila (strain DSM 244 / SL1) (Ectothiorhodospira halophila (strain DSM 244 / SL1)) protein is ATP synthase epsilon chain.